The sequence spans 500 residues: ATP synthase subunit alpha (500 aa).

169–176 is a binding site for ATP; sequence GDRQTGKT.

It belongs to the ATPase alpha/beta chains family. F-type ATPases have 2 components, CF(1) - the catalytic core - and CF(0) - the membrane proton channel. CF(1) has five subunits: alpha(3), beta(3), gamma(1), delta(1), epsilon(1). CF(0) has three main subunits: a(1), b(2) and c(9-12). The alpha and beta chains form an alternating ring which encloses part of the gamma chain. CF(1) is attached to CF(0) by a central stalk formed by the gamma and epsilon chains, while a peripheral stalk is formed by the delta and b chains.

Its subcellular location is the cell inner membrane. The enzyme catalyses ATP + H2O + 4 H(+)(in) = ADP + phosphate + 5 H(+)(out). Its function is as follows. Produces ATP from ADP in the presence of a proton gradient across the membrane. The alpha chain is a regulatory subunit. This is ATP synthase subunit alpha from Fusobacterium nucleatum subsp. nucleatum (strain ATCC 25586 / DSM 15643 / BCRC 10681 / CIP 101130 / JCM 8532 / KCTC 2640 / LMG 13131 / VPI 4355).